A 533-amino-acid chain; its full sequence is DEAD-box ATP-dependent RNA helicase CshA (533 aa).

A Q motif motif is present at residues 2 to 30 (TTFRELGLSDSLLQSVESMGFEEATPIQA). A Helicase ATP-binding domain is found at 33 to 203 (IPHALQGKDI…ERFMTEPQHI (171 aa)). Position 46-53 (46-53 (AQTGTGKT)) interacts with ATP. The DEAD box signature appears at 151–154 (DEAD). The 161-residue stretch at 214-374 (NIQQFYLEVQ…RMDAPTLDEA (161 aa)) folds into the Helicase C-terminal domain. Residues 428 to 533 (TTPIALTSEP…ERKHHSRPQA (106 aa)) form a disordered region. Positions 458-512 (DGNRNRSRDGRGGGDGRNRDRNRDGRNRDGNRDRNRDGNRDRNRDGGSRGRRGEG) are enriched in basic and acidic residues. Basic residues predominate over residues 524–533 (ERKHHSRPQA).

It belongs to the DEAD box helicase family. CshA subfamily. Oligomerizes, may be a member of the RNA degradosome.

It is found in the cytoplasm. It carries out the reaction ATP + H2O = ADP + phosphate + H(+). Functionally, DEAD-box RNA helicase possibly involved in RNA degradation. May work in conjunction with the cold shock proteins to ensure proper initiation of transcription at low and optimal temperatures. Unwinds dsRNA in both 5'- and 3'-directions and shows RNA-dependent ATPase activity. Probably has a somewhat redundant function with cshB, as cshA can partially complement the growth effects of a cshB deletion. Plays a role in adaptation to cold, oxididant and pH stress. The chain is DEAD-box ATP-dependent RNA helicase CshA from Bacillus cereus (strain ATCC 14579 / DSM 31 / CCUG 7414 / JCM 2152 / NBRC 15305 / NCIMB 9373 / NCTC 2599 / NRRL B-3711).